A 314-amino-acid polypeptide reads, in one-letter code: Olfactory receptor 5P68 (314 aa).

Topologically, residues 1-28 (MAFLHNGNHTAVTEFILLGLTDDPVFRV) are extracellular. Asparagine 8 is a glycosylation site (N-linked (GlcNAc...) asparagine). The helical transmembrane segment at 29-49 (ILFTIILCIYLVTVSGNLSTI) threads the bilayer. Residues 50–57 (LLIRVSSQ) are Cytoplasmic-facing. Residues 58 to 78 (LHHPMYFFLSHLASVDIGYSS) traverse the membrane as a helical segment. The Extracellular segment spans residues 79-102 (SVTPNMLANFLVEKNTISYLGCTI). A disulfide bridge connects residues cysteine 100 and cysteine 192. The helical transmembrane segment at 103–123 (QLSLAAFCGTVECFLLATMAY) threads the bilayer. At 124 to 136 (DRFMAICSPLLYS) the chain is on the cytoplasmic side. Residues 137 to 157 (TKMSTQVCIQLIVGSYIGGFL) form a helical membrane-spanning segment. Topologically, residues 158 to 199 (NASSFTLFFLSFLFCGPNRINHFYCDFAPLVALSCSDVSVSE) are extracellular. Residues 200–220 (VVTSFFSGSVTMITMLVIAIS) form a helical membrane-spanning segment. The Cytoplasmic portion of the chain corresponds to 221–240 (YTYILITILKMRSTEGRHKA). A helical membrane pass occupies residues 241 to 261 (FSTCTSHLTAVTLFYGTITFI). Topologically, residues 262–274 (YVMPKSSFSTDQN) are extracellular. Residues 275–295 (KVVSVFYMVVIPMLNPLIYSL) traverse the membrane as a helical segment. The Cytoplasmic segment spans residues 296-314 (RNNEIKDALKRHLGKKIFS).

Belongs to the G-protein coupled receptor 1 family.

Its subcellular location is the cell membrane. In terms of biological role, potential odorant receptor. The protein is Olfactory receptor 5P68 of Mus musculus (Mouse).